A 510-amino-acid chain; its full sequence is Olfactomedin-4 (510 aa).

A signal peptide spans 1–20 (MRPGLSFLLALLFFLGQAAG). Asn72 and Asn136 each carry an N-linked (GlcNAc...) asparagine glycan. Residues 155–234 (DFELIKVEVK…ECEASKDQNT (80 aa)) adopt a coiled-coil conformation. The Olfactomedin-like domain maps to 245-507 (SCGHGGVVNI…LLNYDLSVLQ (263 aa)). Cys246 and Cys437 are oxidised to a cystine. N-linked (GlcNAc...) asparagine glycosylation occurs at Asn253.

As to quaternary structure, homomultimer; disulfide-linked. Interacts with NDUFA13. Interacts with cell surface lectins (locutions ricinus communis agglutinin I, concanavalin-A and wheat germ agglutinin) and cadherin. Post-translationally, N-glycosylated. As to expression, expressed during myeloid lineage development. Much higher expression in bone marrow neutrophils than in peripheral blood neutrophils (at protein level). Strongly expressed in the prostate, small intestine and colon and moderately expressed in the bone marrow and stomach. Overexpressed in some pancreatic cancer tissues.

The protein resides in the secreted. It is found in the extracellular space. Its subcellular location is the mitochondrion. Its function is as follows. May promote proliferation of pancreatic cancer cells by favoring the transition from the S to G2/M phase. In myeloid leukemic cell lines, inhibits cell growth and induces cell differentiation and apoptosis. May play a role in the inhibition of EIF4EBP1 phosphorylation/deactivation. Facilitates cell adhesion, most probably through interaction with cell surface lectins and cadherin. The polypeptide is Olfactomedin-4 (OLFM4) (Homo sapiens (Human)).